The primary structure comprises 143 residues: MAKKIIGFIKLQIPAGKANPSPPVGPALGQRGLNIMEFCKAFNAQTQALEPGLPIPVVITAFADKSFTFVLKTPPATVLIKKAAKIDKGSSKPHTDKVGKITRAQAEEIAKTKMPDLTAADLDAAVRTIAGSARSMGITVEGV.

Belongs to the universal ribosomal protein uL11 family. In terms of assembly, part of the ribosomal stalk of the 50S ribosomal subunit. Interacts with L10 and the large rRNA to form the base of the stalk. L10 forms an elongated spine to which L12 dimers bind in a sequential fashion forming a multimeric L10(L12)X complex. In terms of processing, one or more lysine residues are methylated.

In terms of biological role, forms part of the ribosomal stalk which helps the ribosome interact with GTP-bound translation factors. This Paraburkholderia phymatum (strain DSM 17167 / CIP 108236 / LMG 21445 / STM815) (Burkholderia phymatum) protein is Large ribosomal subunit protein uL11.